The primary structure comprises 636 residues: Threonine--tRNA ligase (636 aa).

A TGS domain is found at 1 to 63 (MINITTSFPN…SKDGSVDPVT (63 aa)). The segment at 244 to 535 (DHRKIAKDLG…LIEHYAGNIP (292 aa)) is catalytic. Positions 335, 386, and 512 each coordinate Zn(2+).

The protein belongs to the class-II aminoacyl-tRNA synthetase family. As to quaternary structure, homodimer. Requires Zn(2+) as cofactor.

The protein localises to the cytoplasm. The catalysed reaction is tRNA(Thr) + L-threonine + ATP = L-threonyl-tRNA(Thr) + AMP + diphosphate + H(+). Functionally, catalyzes the attachment of threonine to tRNA(Thr) in a two-step reaction: L-threonine is first activated by ATP to form Thr-AMP and then transferred to the acceptor end of tRNA(Thr). Also edits incorrectly charged L-seryl-tRNA(Thr). The protein is Threonine--tRNA ligase of Anaplasma marginale (strain Florida).